The following is a 137-amino-acid chain: Fatty acid-binding protein homolog 8 (137 aa).

The Nuclear localization signal motif lies at 24 to 34 (KEIGVGLLIRK).

The protein belongs to the calycin superfamily. Fatty-acid binding protein (FABP) family. As to quaternary structure, monomer. In terms of tissue distribution, intestine.

It localises to the lysosome. The protein localises to the nucleus. Functionally, lysosomal lipid chaperone which binds to a wide range of unsaturated fatty acids, including high affinity binding to oleic acid and oleoylethanolamide, to transport them into the nucleus. As part of a lysosome-to-nucleus retrograde lipid signaling pathway, translocates into the nucleus where it activates the transcription of genes promoting longevity and activation of mitochondrial beta oxidation. In Caenorhabditis elegans, this protein is Fatty acid-binding protein homolog 8.